Here is a 110-residue protein sequence, read N- to C-terminus: Keratin, type I cytoskeletal 19 (110 aa).

The tract at residues 1-8 (FGSGGVFR) is head. Serine 3 carries the post-translational modification Phosphoserine. In terms of domain architecture, IF rod spans 7 to 110 (FRITMQNLND…KLEQEIATYR (104 aa)). Arginine 8 carries the post-translational modification Omega-N-methylarginine. The segment at 9–42 (ITMQNLNDRLASYLDKVRALEQANGELEVKIRDW) is coil 1A. Residues 43–45 (YQK) are linker 1. A coil 1B region spans residues 46 to 83 (IVLQIDNARTKFETEQALRVLDELTLARKNHEEEISAL). Positions 85–110 (ADTERQNQEYQQLMDIKLEQEIATYR) are coil 2. The interval 85–110 (ADTERQNQEYQQLMDIKLEQEIATYR) is necessary for interaction with PNN.

The protein belongs to the intermediate filament family. Heterotetramer of two type I and two type II keratins. Interacts with PNN and the actin-binding domain of DMD.

Its function is as follows. Involved in the organization of myofibers. Together with KRT8, helps to link the contractile apparatus to dystrophin at the costameres of striated muscle. This is Keratin, type I cytoskeletal 19 from Mesocricetus auratus (Golden hamster).